Reading from the N-terminus, the 908-residue chain is MKLSPSAGGVSDQPPSPPEVAEEQKCLNSELWHACAGPLVSLPAVGSRVVYFPQGHSEQVAASTNKEMESQIPNYPNLPPQLICQLHNVTMHADAETDEVYAQMTLQPLSPQELKDPFLPAELGTASKQPTNYFCKTLTASDTSTHGGFSVPRRAAEKVFPPLDFTQQPPAQELMAKDLHGNEWKFRHIFRGQPKRHLLTTGWSVFVSAKRLVAGDSVLFIWNDSNQLLLGIRRANRPQTVMPSSVLSSDSMHIGLLAAAAHAASTNSRFTIFYNPRASPSEFVIPLAKYVKAVYHTRISVGMRFRMLFETEESSVRRYMGTITGISDLDPVRWMNSHWRSVKVGWDESTAGERQPRVSLWEIEPLTTFPMYPSPFPLRLKRPWPTGLPSLYGGKEDDLASSLMWLRDSQNTGFQSLNFGGLGMSPWMQPRLDSSLLGLQPDMYQTIAAAAALQNTTKQVSPAMLQFQQPQNIVGRSSLLSSQILQQAQPQFQQMYHQNINGNSIQGHSQPEYLQQPLQHCQSFNEQKPQLQPQQQQQESHQQQPQHQQMQQQKHLSNFQTVPNALSVFSQLSSTPQSTPSTLQTVSPFSQQHNFPDTNISCLSPSNVSSMHDTLRSFPSEAASDLPGVPRITPVPVSDPWSSKRVAVESTITSRPHDISSQIENFDLTPSSIPQNSTLAPLPGRECLVDQDGSSDPQNHFLFGVNIDSQSLLMQDGIPSLHNENSSSTIPYSTSNFLSPSQDDYPLSQTLTTPGCLDESGYVPCSDNADQVKRPHATFVKVYKSGTVGRLLDITRFSSYHELRSEVGRLFGLEGQLEDPLRSGWQLVFVDREDDVLLVGDDPWQEFVNSVSCIKILSPQEVQQMGKPGIELFSTSARRLGNSCDNYMSRQESRSLSTGIASVGSVEF.

Residues 1–21 (MKLSPSAGGVSDQPPSPPEVA) are disordered. Positions 134 to 236 (FCKTLTASDT…QLLLGIRRAN (103 aa)) form a DNA-binding region, TF-B3. A disordered region spans residues 525–556 (NEQKPQLQPQQQQQESHQQQPQHQQMQQQKHL). Residues 526 to 556 (EQKPQLQPQQQQQESHQQQPQHQQMQQQKHL) show a composition bias toward low complexity. The region spanning 777-861 (ATFVKVYKSG…SCIKILSPQE (85 aa)) is the PB1 domain.

This sequence belongs to the ARF family. Homodimers and heterodimers.

The protein resides in the nucleus. In terms of biological role, auxin response factors (ARFs) are transcriptional factors that bind specifically to the DNA sequence 5'-TGTCTC-3' found in the auxin-responsive promoter elements (AuxREs). The chain is Auxin response factor 6 (ARF6) from Oryza sativa subsp. indica (Rice).